The primary structure comprises 236 residues: Ribose-5-phosphate isomerase (236 aa).

Substrate-binding positions include 27-30, 84-87, and 97-100; these read TGST, DGTD, and KGRG. Glu106 serves as the catalytic Proton acceptor. A substrate-binding site is contributed by Lys124.

Belongs to the ribose 5-phosphate isomerase family. In terms of assembly, homodimer.

It catalyses the reaction aldehydo-D-ribose 5-phosphate = D-ribulose 5-phosphate. The protein operates within carbohydrate degradation; pentose phosphate pathway; D-ribose 5-phosphate from D-ribulose 5-phosphate (non-oxidative stage): step 1/1. Functionally, involved in the first step of the non-oxidative branch of the pentose phosphate pathway. It catalyzes the reversible conversion of ribose-5-phosphate to ribulose 5-phosphate. The protein is Ribose-5-phosphate isomerase of Plasmodium falciparum (isolate 3D7).